The primary structure comprises 1345 residues: DNA-directed RNA polymerase subunit beta (1345 aa).

This sequence belongs to the RNA polymerase beta chain family. As to quaternary structure, the RNAP catalytic core consists of 2 alpha, 1 beta, 1 beta' and 1 omega subunit. When a sigma factor is associated with the core the holoenzyme is formed, which can initiate transcription.

The enzyme catalyses RNA(n) + a ribonucleoside 5'-triphosphate = RNA(n+1) + diphosphate. In terms of biological role, DNA-dependent RNA polymerase catalyzes the transcription of DNA into RNA using the four ribonucleoside triphosphates as substrates. The sequence is that of DNA-directed RNA polymerase subunit beta from Shewanella sp. (strain ANA-3).